Here is a 310-residue protein sequence, read N- to C-terminus: Coproporphyrin III ferrochelatase (310 aa).

Residues Tyr13, Arg30, 46-47 (RY), Ser54, and Tyr125 contribute to the Fe-coproporphyrin III site. 2 residues coordinate Fe(2+): His181 and Glu262.

Belongs to the ferrochelatase family.

Its subcellular location is the cytoplasm. It catalyses the reaction Fe-coproporphyrin III + 2 H(+) = coproporphyrin III + Fe(2+). It participates in porphyrin-containing compound metabolism; protoheme biosynthesis. Functionally, involved in coproporphyrin-dependent heme b biosynthesis. Catalyzes the insertion of ferrous iron into coproporphyrin III to form Fe-coproporphyrin III. This Halalkalibacterium halodurans (strain ATCC BAA-125 / DSM 18197 / FERM 7344 / JCM 9153 / C-125) (Bacillus halodurans) protein is Coproporphyrin III ferrochelatase.